The following is a 126-amino-acid chain: Small ribosomal subunit protein uS13 (126 aa).

Residues 94–126 are disordered; the sequence is GLPVRGQKTRNNAHTVKGKPKAAIAGKKKNKVN. A compositionally biased stretch (basic residues) spans 109-126; sequence VKGKPKAAIAGKKKNKVN.

This sequence belongs to the universal ribosomal protein uS13 family. In terms of assembly, part of the 30S ribosomal subunit. Forms a loose heterodimer with protein S19. Forms two bridges to the 50S subunit in the 70S ribosome.

In terms of biological role, located at the top of the head of the 30S subunit, it contacts several helices of the 16S rRNA. In the 70S ribosome it contacts the 23S rRNA (bridge B1a) and protein L5 of the 50S subunit (bridge B1b), connecting the 2 subunits; these bridges are implicated in subunit movement. Contacts the tRNAs in the A and P-sites. This Aster yellows witches'-broom phytoplasma (strain AYWB) protein is Small ribosomal subunit protein uS13.